Consider the following 567-residue polypeptide: 2-succinyl-5-enolpyruvyl-6-hydroxy-3-cyclohexene-1-carboxylate synthase (567 aa).

It belongs to the TPP enzyme family. MenD subfamily. Homodimer. The cofactor is Mg(2+). Mn(2+) serves as cofactor. Requires thiamine diphosphate as cofactor.

The enzyme catalyses isochorismate + 2-oxoglutarate + H(+) = 5-enolpyruvoyl-6-hydroxy-2-succinyl-cyclohex-3-ene-1-carboxylate + CO2. Its pathway is quinol/quinone metabolism; 1,4-dihydroxy-2-naphthoate biosynthesis; 1,4-dihydroxy-2-naphthoate from chorismate: step 2/7. It functions in the pathway quinol/quinone metabolism; menaquinone biosynthesis. Catalyzes the thiamine diphosphate-dependent decarboxylation of 2-oxoglutarate and the subsequent addition of the resulting succinic semialdehyde-thiamine pyrophosphate anion to isochorismate to yield 2-succinyl-5-enolpyruvyl-6-hydroxy-3-cyclohexene-1-carboxylate (SEPHCHC). This is 2-succinyl-5-enolpyruvyl-6-hydroxy-3-cyclohexene-1-carboxylate synthase from Yersinia pseudotuberculosis serotype IB (strain PB1/+).